The chain runs to 132 residues: Small ribosomal subunit protein uS8c (132 aa).

This sequence belongs to the universal ribosomal protein uS8 family. In terms of assembly, part of the 30S ribosomal subunit.

The protein resides in the plastid. It localises to the chloroplast. One of the primary rRNA binding proteins, it binds directly to 16S rRNA central domain where it helps coordinate assembly of the platform of the 30S subunit. The protein is Small ribosomal subunit protein uS8c (rps8) of Gracilaria tenuistipitata var. liui (Red alga).